A 146-amino-acid polypeptide reads, in one-letter code: Hemoglobin cathodic subunit beta (146 aa).

Residues Glu-2–Phe-146 enclose the Globin domain. 2 residues coordinate heme b: His-63 and His-92.

Belongs to the globin family. As to quaternary structure, heterotetramer of two alpha chains and two beta chains. As to expression, red blood cells.

In terms of biological role, involved in oxygen transport from gills to the various peripheral tissues. The polypeptide is Hemoglobin cathodic subunit beta (Gymnothorax unicolor (Brown moray)).